The sequence spans 780 residues: Protein phosphatase 1 regulatory subunit 21 (780 aa).

Coiled-coil stretches lie at residues M1 to E209 and E556 to R605. Residues E84–Q104 are disordered. Residues E95–Q104 show a composition bias toward low complexity. Phosphothreonine is present on T652. Residues A694–L742 adopt a coiled-coil conformation.

As to quaternary structure, component of the FERRY complex, composed of five subunits: TBCK, PPP1R21, FERRY3, CRYZL1 and GATAD1, with a ratio of 1:2:1:2:4 respectively. PPP1R21 serves as a binding hub connecting all five complex subunits to mediate the binding to specific mitochondrial mRNAs. Interacts with the GTP-bound form of RAB5A (via its C-terminal region); linking the mRNP complex onto trafficking endosomes for active mRNA transport. Interacts with PPP1CA. As to expression, expressed at 16 dpc in the cortex (at protein level).

It is found in the early endosome. Its function is as follows. Component of the FERRY complex (Five-subunit Endosomal Rab5 and RNA/ribosome intermediary). The FERRY complex directly interacts with mRNAs and RAB5A, and functions as a RAB5A effector involved in the localization and the distribution of specific mRNAs most likely by mediating their endosomal transport. The complex recruits mRNAs and ribosomes to early endosomes through direct mRNA-interaction. In the complex, PPP1R21 serves as a binding hub connecting all five complex subunits and mediating the binding to mRNA and early endosomes via RAB5A. Putative regulator of protein phosphatase 1 (PP1) activity. May play a role in the endosomal sorting process or in endosome maturation pathway. This is Protein phosphatase 1 regulatory subunit 21 (Ppp1r21) from Mus musculus (Mouse).